The sequence spans 293 residues: MTENNDIKMVIITGMSGAGKTVALQSFEDLGYFCVDNLPPMLLPKFIELMADSKGKMNKVALGIDLRGREFFEYLWGALDDLSERTWIIPHILFLDAKDSTLVTRYKETRRSHPLAPTGLPLKGIEAERGLLTDMKARANIVLDTSDLKPKELREKIVHLFSTETEQAFRVNVMSFGFKYGIPIDADLVFDVRFLPNPYYIPHMKPLTGLDEEVSSYVLKFNETHKFLEKLTDLITFMLPHYKREGKSQLVIAIGCTGGQHRSVTLTEYLGKHLKPEYSVHVSHRDVEKRKGH.

14-21 lines the ATP pocket; sequence GMSGAGKT. A GTP-binding site is contributed by 65-68; sequence DLRG.

Belongs to the RapZ-like family.

Displays ATPase and GTPase activities. This Bacillus mycoides (strain KBAB4) (Bacillus weihenstephanensis) protein is Nucleotide-binding protein BcerKBAB4_4948.